Reading from the N-terminus, the 682-residue chain is Potassium-transporting ATPase ATP-binding subunit (682 aa).

A run of 4 helical transmembrane segments spans residues 44-64 (VMAVVMGGTLLAAVITASGHG), 66-86 (AGFGWAVTAILFVTVLFGNFA), 233-253 (LTFLIVVASLPAIAGFVGVTL), and 257-277 (LLIALLVCLIPTTIGGLLPAI). D310 acts as the 4-aspartylphosphate intermediate in catalysis. ATP-binding positions include D347, E351, 377-384 (FTAQTRMS), and K395. The Mg(2+) site is built by D518 and D522. Helical transmembrane passes span 588–608 (FAILPALFAAAIPSMAALNVM), 616–636 (AVLAALIFNALIIPALIPLAL), and 658–678 (GLGGVLLPFAAIKLIDLALVA).

The protein belongs to the cation transport ATPase (P-type) (TC 3.A.3) family. Type IA subfamily. As to quaternary structure, the system is composed of three essential subunits: KdpA, KdpB and KdpC.

Its subcellular location is the cell inner membrane. It catalyses the reaction K(+)(out) + ATP + H2O = K(+)(in) + ADP + phosphate + H(+). Its function is as follows. Part of the high-affinity ATP-driven potassium transport (or Kdp) system, which catalyzes the hydrolysis of ATP coupled with the electrogenic transport of potassium into the cytoplasm. This subunit is responsible for energy coupling to the transport system and for the release of the potassium ions to the cytoplasm. The chain is Potassium-transporting ATPase ATP-binding subunit from Xanthomonas campestris pv. campestris (strain ATCC 33913 / DSM 3586 / NCPPB 528 / LMG 568 / P 25).